A 988-amino-acid polypeptide reads, in one-letter code: Ephrin type-B receptor 3 (988 aa).

The tract at residues 1–24 (GVSSRARRPPGSSRSSRRGVTSEL) is disordered. Topologically, residues 1 to 534 (GVSSRARRPP…TSKTFQELPL (534 aa)) are extracellular. Positions 11-189 (GSSRSSRRGV…FYKKCSNTIA (179 aa)) constitute an Eph LBD domain. Cys53 and Cys171 are joined by a disulfide. Fibronectin type-III domains are found at residues 311–424 (VPSA…TNQA) and 425–522 (APSA…TAED). N-linked (GlcNAc...) asparagine glycans are attached at residues Asn323 and Asn418. The helical transmembrane segment at 535–555 (IVGSATAGLLFVIVVVIIAIV) threads the bilayer. At 556–988 (CFRKGMVTEQ…QMNQTLPVQV (433 aa)) the chain is on the cytoplasmic side. Tyr604 carries the post-translational modification Phosphotyrosine; by autocatalysis. The 264-residue stretch at 623–886 (VKIEEVIGAG…QIVNTLDKLI (264 aa)) folds into the Protein kinase domain. ATP is bound by residues 629–637 (IGAGEFGEV) and Lys655. Catalysis depends on Asp748, which acts as the Proton acceptor. Residues 915 to 979 (TTFTTVGDWL…LSSIQDMRLQ (65 aa)) enclose the SAM domain. The short motif at 986–988 (VQV) is the PDZ-binding element.

This sequence belongs to the protein kinase superfamily. Tyr protein kinase family. Ephrin receptor subfamily. In terms of assembly, heterotetramer upon binding of the ligand. The heterotetramer is composed of an ephrin dimer and a receptor dimer. Oligomerization is probably required to induce biological responses. Phosphorylated. Autophosphorylates upon ligand-binding. Autophosphorylation on Tyr-604 is required for interaction with SH2 domain-containing proteins. As to expression, present in 10-day embryonic brain and body tissues. Prominent expression in kidney. Lower expression in lung, and barely detectable in brain, liver, heart, skeletal muscle and thymus.

It localises to the cell membrane. It is found in the cell projection. Its subcellular location is the dendrite. The enzyme catalyses L-tyrosyl-[protein] + ATP = O-phospho-L-tyrosyl-[protein] + ADP + H(+). Functionally, receptor tyrosine kinase which binds promiscuously transmembrane ephrin-B family ligands residing on adjacent cells, leading to contact-dependent bidirectional signaling into neighboring cells. The signaling pathway downstream of the receptor is referred to as forward signaling while the signaling pathway downstream of the ephrin ligand is referred to as reverse signaling. Generally has an overlapping and redundant function with EPHB2. Like EPHB2, functions in axon guidance during development. In addition to its role in axon guidance also plays an important redundant role with other ephrin-B receptors in development and maturation of dendritic spines and the formation of excitatory synapses. May control other aspects of development through regulation of cell migration and positioning. This is Ephrin type-B receptor 3 (EPHB3) from Gallus gallus (Chicken).